Reading from the N-terminus, the 347-residue chain is NADH-quinone oxidoreductase subunit H 1 (347 aa).

A run of 9 helical transmembrane segments spans residues 14 to 34 (IMIG…AYVL), 50 to 70 (PNVV…KFVF), 83 to 103 (IFLL…AVIP), 115 to 135 (VGIL…IMGG), 161 to 181 (IGFV…TDIV), 198 to 218 (FLDW…ISAL), 258 to 278 (AICL…LPPV), 286 to 306 (VPGI…FAMV), and 321 to 341 (LGWK…AFVL).

The protein belongs to the complex I subunit 1 family. NDH-1 is composed of 14 different subunits. Subunits NuoA, H, J, K, L, M, N constitute the membrane sector of the complex.

It localises to the cell inner membrane. The catalysed reaction is a quinone + NADH + 5 H(+)(in) = a quinol + NAD(+) + 4 H(+)(out). In terms of biological role, NDH-1 shuttles electrons from NADH, via FMN and iron-sulfur (Fe-S) centers, to quinones in the respiratory chain. The immediate electron acceptor for the enzyme in this species is believed to be ubiquinone. Couples the redox reaction to proton translocation (for every two electrons transferred, four hydrogen ions are translocated across the cytoplasmic membrane), and thus conserves the redox energy in a proton gradient. This subunit may bind ubiquinone. The chain is NADH-quinone oxidoreductase subunit H 1 from Rhizobium meliloti (strain 1021) (Ensifer meliloti).